We begin with the raw amino-acid sequence, 445 residues long: Argininosuccinate synthase (445 aa).

ATP contacts are provided by residues Ala-17–Ser-25 and Ala-43. Tyr-99 contributes to the L-citrulline binding site. Residues Gly-129 and Thr-131 each contribute to the ATP site. L-aspartate is bound by residues Thr-131, Asn-135, and Asp-136. An L-citrulline-binding site is contributed by Asn-135. Position 136 (Asp-136) interacts with ATP. Positions 139 and 192 each coordinate L-citrulline. Asp-194 contacts ATP. Thr-201, Glu-203, and Glu-280 together coordinate L-citrulline.

It belongs to the argininosuccinate synthase family. Type 2 subfamily. Homotetramer.

It localises to the cytoplasm. The catalysed reaction is L-citrulline + L-aspartate + ATP = 2-(N(omega)-L-arginino)succinate + AMP + diphosphate + H(+). It participates in amino-acid biosynthesis; L-arginine biosynthesis; L-arginine from L-ornithine and carbamoyl phosphate: step 2/3. This chain is Argininosuccinate synthase, found in Rhodopseudomonas palustris (strain BisB5).